We begin with the raw amino-acid sequence, 149 residues long: D-aminoacyl-tRNA deacylase (149 aa).

The Gly-cisPro motif, important for rejection of L-amino acids motif lies at 137–138; sequence GP.

The protein belongs to the DTD family. Homodimer.

The protein localises to the cytoplasm. It carries out the reaction glycyl-tRNA(Ala) + H2O = tRNA(Ala) + glycine + H(+). It catalyses the reaction a D-aminoacyl-tRNA + H2O = a tRNA + a D-alpha-amino acid + H(+). Functionally, an aminoacyl-tRNA editing enzyme that deacylates mischarged D-aminoacyl-tRNAs. Also deacylates mischarged glycyl-tRNA(Ala), protecting cells against glycine mischarging by AlaRS. Acts via tRNA-based rather than protein-based catalysis; rejects L-amino acids rather than detecting D-amino acids in the active site. By recycling D-aminoacyl-tRNA to D-amino acids and free tRNA molecules, this enzyme counteracts the toxicity associated with the formation of D-aminoacyl-tRNA entities in vivo and helps enforce protein L-homochirality. The sequence is that of D-aminoacyl-tRNA deacylase from Herminiimonas arsenicoxydans.